A 157-amino-acid polypeptide reads, in one-letter code: Transcription elongation factor GreA (157 aa).

Belongs to the GreA/GreB family.

Functionally, necessary for efficient RNA polymerase transcription elongation past template-encoded arresting sites. The arresting sites in DNA have the property of trapping a certain fraction of elongating RNA polymerases that pass through, resulting in locked ternary complexes. Cleavage of the nascent transcript by cleavage factors such as GreA or GreB allows the resumption of elongation from the new 3'terminus. GreA releases sequences of 2 to 3 nucleotides. In Brucella abortus (strain S19), this protein is Transcription elongation factor GreA.